A 498-amino-acid polypeptide reads, in one-letter code: Ammonium transporter 1 member 3 (498 aa).

A run of 11 helical transmembrane segments spans residues 41-61, 76-96, 122-142, 150-170, 194-214, 238-258, 277-299, 307-327, 329-349, 362-382, and 414-434; these read LLFSAYLVFAMQLGFAMLCAG, VLDAAAGALFYYLFGFAFAFG, FFLFQWAFAIAAAGITSGSIA, YLIYSAFLTGFVYPVVSHWFW, FAGSGVVHLVGGIAGLWGAFI, LVVLGTFLLWFGWFGFNPGSF, AVGRTAVTTSLAGSVAALTTLYG, WNVTDVCNGLLGGFAAITAGC, VVDPWASVICGFVSAWVLIGC, LEATQLHAGCGAWGIIFTALF, and IVQILVIVGWVSATMGTLFYV. The segment at 473–498 is disordered; the sequence is RAKSAAETARVEPRKSPEQAAAGQFV.

Belongs to the ammonia transporter channel (TC 1.A.11.2) family. As to expression, expressed in roots.

It is found in the membrane. In terms of biological role, ammonium transporter probably involved in ammonium uptake from the soil. The sequence is that of Ammonium transporter 1 member 3 (AMT1-3) from Oryza sativa subsp. japonica (Rice).